We begin with the raw amino-acid sequence, 205 residues long: Small ribosomal subunit protein uS4 (205 aa).

Basic and acidic residues predominate over residues 1–16 (MSKRESSKYKIDRRMG). The tract at residues 1-46 (MSKRESSKYKIDRRMGENIWGRPKSPVNRREYGPGQHGQRRKSKLS) is disordered. One can recognise an S4 RNA-binding domain in the interval 94-157 (SRLDAIVYRA…KQLVTVLEAV (64 aa)).

Belongs to the universal ribosomal protein uS4 family. As to quaternary structure, part of the 30S ribosomal subunit. Contacts protein S5. The interaction surface between S4 and S5 is involved in control of translational fidelity.

Its function is as follows. One of the primary rRNA binding proteins, it binds directly to 16S rRNA where it nucleates assembly of the body of the 30S subunit. Functionally, with S5 and S12 plays an important role in translational accuracy. This Rhizobium meliloti (strain 1021) (Ensifer meliloti) protein is Small ribosomal subunit protein uS4.